We begin with the raw amino-acid sequence, 64 residues long: Large ribosomal subunit protein bL28C (64 aa).

Belongs to the bacterial ribosomal protein bL28 family.

This is Large ribosomal subunit protein bL28C from Mycobacterium tuberculosis (strain ATCC 25618 / H37Rv).